Here is a 405-residue protein sequence, read N- to C-terminus: Chalcone synthase (405 aa).

C170 is a catalytic residue.

Belongs to the thiolase-like superfamily. Chalcone/stilbene synthases family.

The enzyme catalyses (E)-4-coumaroyl-CoA + 3 malonyl-CoA + 3 H(+) = 2',4,4',6'-tetrahydroxychalcone + 3 CO2 + 4 CoA. Its pathway is secondary metabolite biosynthesis; flavonoid biosynthesis. The primary product of this enzyme is 4,2',4',6'-tetrahydroxychalcone (also termed naringenin-chalcone or chalcone) which can under specific conditions spontaneously isomerize into naringenin. This chain is Chalcone synthase (CHS), found in Equisetum arvense (Field horsetail).